We begin with the raw amino-acid sequence, 227 residues long: 7-cyano-7-deazaguanine synthase (227 aa).

8–18 (LSGGLDSATVL) lines the ATP pocket. Zn(2+)-binding residues include cysteine 191, cysteine 201, cysteine 204, and cysteine 207.

Belongs to the QueC family. It depends on Zn(2+) as a cofactor.

The enzyme catalyses 7-carboxy-7-deazaguanine + NH4(+) + ATP = 7-cyano-7-deazaguanine + ADP + phosphate + H2O + H(+). The protein operates within purine metabolism; 7-cyano-7-deazaguanine biosynthesis. Catalyzes the ATP-dependent conversion of 7-carboxy-7-deazaguanine (CDG) to 7-cyano-7-deazaguanine (preQ(0)). The sequence is that of 7-cyano-7-deazaguanine synthase from Paramagnetospirillum magneticum (strain ATCC 700264 / AMB-1) (Magnetospirillum magneticum).